Consider the following 269-residue polypeptide: Eukaryotic translation initiation factor 3 subunit G-1 (269 aa).

Residues 188–266 (AAIRISNLSE…LILSVEWSKP (79 aa)) form the RRM domain.

Belongs to the eIF-3 subunit G family. In terms of assembly, component of the eukaryotic translation initiation factor 3 (eIF-3) complex. The eIF-3 complex interacts with pix.

The protein localises to the cytoplasm. Functionally, RNA-binding component of the eukaryotic translation initiation factor 3 (eIF-3) complex, which is involved in protein synthesis of a specialized repertoire of mRNAs and, together with other initiation factors, stimulates binding of mRNA and methionyl-tRNAi to the 40S ribosome. The eIF-3 complex specifically targets and initiates translation of a subset of mRNAs involved in cell proliferation. This subunit can bind 18S rRNA. In Drosophila grimshawi (Hawaiian fruit fly), this protein is Eukaryotic translation initiation factor 3 subunit G-1.